The primary structure comprises 236 residues: Eukaryotic translation initiation factor 3 subunit J (236 aa).

Residues 1 to 84 (MADDWESAAD…RLEEEAEAQR (84 aa)) are disordered. Acidic residues predominate over residues 28–46 (GEDEDEDIKDSWEDEEEKK). 2 stretches are compositionally biased toward basic and acidic residues: residues 47–58 (DEEKPTKTEAPA) and 68–77 (AKLEQQARLE).

The protein belongs to the eIF-3 subunit J family. In terms of assembly, component of the eukaryotic translation initiation factor 3 (eIF-3) complex. The eIF-3 complex interacts with pix.

The protein localises to the cytoplasm. Component of the eukaryotic translation initiation factor 3 (eIF-3) complex, which is involved in protein synthesis of a specialized repertoire of mRNAs and, together with other initiation factors, stimulates binding of mRNA and methionyl-tRNAi to the 40S ribosome. The eIF-3 complex specifically targets and initiates translation of a subset of mRNAs involved in cell proliferation. This chain is Eukaryotic translation initiation factor 3 subunit J, found in Drosophila yakuba (Fruit fly).